The following is a 140-amino-acid chain: Cell division protein SepF (140 aa).

The segment at 15–47 (DSQYEEPTEASQAAAPTESATNTRSTPKVVPMQ) is disordered.

This sequence belongs to the SepF family. Homodimer. Interacts with FtsZ.

The protein localises to the cytoplasm. Cell division protein that is part of the divisome complex and is recruited early to the Z-ring. Probably stimulates Z-ring formation, perhaps through the cross-linking of FtsZ protofilaments. Its function overlaps with FtsA. The chain is Cell division protein SepF from Lactiplantibacillus plantarum (strain ATCC BAA-793 / NCIMB 8826 / WCFS1) (Lactobacillus plantarum).